A 482-amino-acid chain; its full sequence is tRNA(Ile)-lysidine synthase (482 aa).

An ATP-binding site is contributed by Ser28–Ser33.

It belongs to the tRNA(Ile)-lysidine synthase family.

The protein localises to the cytoplasm. The enzyme catalyses cytidine(34) in tRNA(Ile2) + L-lysine + ATP = lysidine(34) in tRNA(Ile2) + AMP + diphosphate + H(+). Functionally, ligates lysine onto the cytidine present at position 34 of the AUA codon-specific tRNA(Ile) that contains the anticodon CAU, in an ATP-dependent manner. Cytidine is converted to lysidine, thus changing the amino acid specificity of the tRNA from methionine to isoleucine. This chain is tRNA(Ile)-lysidine synthase, found in Symbiobacterium thermophilum (strain DSM 24528 / JCM 14929 / IAM 14863 / T).